The following is a 339-amino-acid chain: Lipoate--protein ligase (339 aa).

One can recognise a BPL/LPL catalytic domain in the interval 31-221; sequence FLDDDILFPY…QLLQIETISQ (191 aa). Residues R73, 78–81, K135, and A139 each bind ATP; that span reads GAVY. K135 provides a ligand contact to (R)-lipoate.

This sequence belongs to the LplA family.

It catalyses the reaction L-lysyl-[lipoyl-carrier protein] + (R)-lipoate + ATP = N(6)-[(R)-lipoyl]-L-lysyl-[lipoyl-carrier protein] + AMP + diphosphate + H(+). Its pathway is protein modification; protein lipoylation via exogenous pathway; protein N(6)-(lipoyl)lysine from lipoate: step 1/2. It functions in the pathway protein modification; protein lipoylation via exogenous pathway; protein N(6)-(lipoyl)lysine from lipoate: step 2/2. Functionally, catalyzes specifically the lipoylation of GcvH-L (SpyM50867), likely via the ATP-dependent activation of lipoate to lipoyl-AMP and the transfer of the activated lipoyl onto the lipoyl domain of the target protein. The protein is Lipoate--protein ligase of Streptococcus pyogenes serotype M5 (strain Manfredo).